Reading from the N-terminus, the 258-residue chain is Regulatory protein RecX (258 aa).

This sequence belongs to the RecX family.

The protein localises to the cytoplasm. In terms of biological role, modulates RecA activity. In Streptococcus uberis (strain ATCC BAA-854 / 0140J), this protein is Regulatory protein RecX.